A 606-amino-acid polypeptide reads, in one-letter code: NADH-ubiquinone oxidoreductase chain 5 (606 aa).

16 helical membrane passes run leucine 3–leucine 23, tyrosine 35–isoleucine 55, methionine 87–tyrosine 107, phenylalanine 117–leucine 137, leucine 140–glycine 160, alanine 171–phenylalanine 191, leucine 211–leucine 233, threonine 241–isoleucine 261, methionine 273–leucine 293, isoleucine 301–asparagine 320, alanine 325–isoleucine 347, leucine 366–leucine 386, serine 402–tyrosine 422, leucine 457–isoleucine 477, leucine 488–threonine 508, and glycine 582–phenylalanine 602.

It belongs to the complex I subunit 5 family. As to quaternary structure, core subunit of respiratory chain NADH dehydrogenase (Complex I) which is composed of 45 different subunits.

It is found in the mitochondrion inner membrane. It catalyses the reaction a ubiquinone + NADH + 5 H(+)(in) = a ubiquinol + NAD(+) + 4 H(+)(out). Core subunit of the mitochondrial membrane respiratory chain NADH dehydrogenase (Complex I) which catalyzes electron transfer from NADH through the respiratory chain, using ubiquinone as an electron acceptor. Essential for the catalytic activity and assembly of complex I. In Pseudosoriculus fumidus (Taiwanese brown-toothed shrew), this protein is NADH-ubiquinone oxidoreductase chain 5 (MT-ND5).